The sequence spans 204 residues: ATP-dependent Clp protease proteolytic subunit (204 aa).

Ser102 acts as the Nucleophile in catalysis. His127 is a catalytic residue.

The protein belongs to the peptidase S14 family. Fourteen ClpP subunits assemble into 2 heptameric rings which stack back to back to give a disk-like structure with a central cavity, resembling the structure of eukaryotic proteasomes.

It localises to the cytoplasm. It catalyses the reaction Hydrolysis of proteins to small peptides in the presence of ATP and magnesium. alpha-casein is the usual test substrate. In the absence of ATP, only oligopeptides shorter than five residues are hydrolyzed (such as succinyl-Leu-Tyr-|-NHMec, and Leu-Tyr-Leu-|-Tyr-Trp, in which cleavage of the -Tyr-|-Leu- and -Tyr-|-Trp bonds also occurs).. Functionally, cleaves peptides in various proteins in a process that requires ATP hydrolysis. Has a chymotrypsin-like activity. Plays a major role in the degradation of misfolded proteins. The polypeptide is ATP-dependent Clp protease proteolytic subunit (Neisseria meningitidis serogroup C (strain 053442)).